The primary structure comprises 1325 residues: Nonribosomal peptide synthetase (1325 aa).

Residues 248 to 644 (YQQLDRLSTR…LGEIEYQIQQ (397 aa)) are adenylation. Positions 779–856 (EIVNPGEITL…DQARLLRPLS (78 aa)) constitute a Carrier domain. S816 is modified (O-(pantetheine 4'-phosphoryl)serine). The tract at residues 893-1310 (EDVYPCTPLQ…DDYSTTLHTL (418 aa)) is condensation.

Belongs to the NRP synthetase family. The cofactor is pantetheine 4'-phosphate.

The protein operates within antifungal biosynthesis. Nonribosomal peptide synthetase; part of the gene cluster that mediates the biosynthesis of the tetrahydropyranyl antifungal agent lanomycin that acts as an inhibitor of CYP51 and blocks the ergosterol biosynthesis. The biosynthesis probably begins with the formation of an hexaketide, followed by methionine mediated alkylation of C-2 and C-6, and methylation of the reduced C-3 oxygen, pyran forming reductive ring closure, oxygenation of C-4, beta-keto reduction, enoyl reduction and dehydration of the remaining oxygens, and finally, acylation with glycine to complete the biosynthesis. The protein is Nonribosomal peptide synthetase of Pyrenophora dematioidea (Helminthosporium dematioideum).